The sequence spans 139 residues: Sec-independent protein translocase protein TatB (139 aa).

A helical membrane pass occupies residues 1 to 21 (MFDIGFTELLLVGLVALMVLG). A disordered region spans residues 69 to 139 (LDLEREMKQS…PLRSDRPSEP (71 aa)). Positions 80–95 (MPPPASNPAATPPSPP) are enriched in pro residues.

This sequence belongs to the TatB family. The Tat system comprises two distinct complexes: a TatABC complex, containing multiple copies of TatA, TatB and TatC subunits, and a separate TatA complex, containing only TatA subunits. Substrates initially bind to the TatABC complex, which probably triggers association of the separate TatA complex to form the active translocon.

Its subcellular location is the cell inner membrane. Its function is as follows. Part of the twin-arginine translocation (Tat) system that transports large folded proteins containing a characteristic twin-arginine motif in their signal peptide across membranes. Together with TatC, TatB is part of a receptor directly interacting with Tat signal peptides. TatB may form an oligomeric binding site that transiently accommodates folded Tat precursor proteins before their translocation. The chain is Sec-independent protein translocase protein TatB from Stutzerimonas stutzeri (strain A1501) (Pseudomonas stutzeri).